The primary structure comprises 283 residues: 2-dehydro-3-deoxyphosphooctonate aldolase (283 aa).

It belongs to the KdsA family.

The protein localises to the cytoplasm. The enzyme catalyses D-arabinose 5-phosphate + phosphoenolpyruvate + H2O = 3-deoxy-alpha-D-manno-2-octulosonate-8-phosphate + phosphate. It participates in carbohydrate biosynthesis; 3-deoxy-D-manno-octulosonate biosynthesis; 3-deoxy-D-manno-octulosonate from D-ribulose 5-phosphate: step 2/3. The protein operates within bacterial outer membrane biogenesis; lipopolysaccharide biosynthesis. This chain is 2-dehydro-3-deoxyphosphooctonate aldolase, found in Vibrio cholerae serotype O1 (strain ATCC 39315 / El Tor Inaba N16961).